The chain runs to 190 residues: Elongation factor P-like protein (190 aa).

It belongs to the elongation factor P family.

The protein is Elongation factor P-like protein of Serratia proteamaculans (strain 568).